Here is a 245-residue protein sequence, read N- to C-terminus: tRNA pseudouridine synthase A (245 aa).

D52 functions as the Nucleophile in the catalytic mechanism. Y111 contributes to the substrate binding site.

The protein belongs to the tRNA pseudouridine synthase TruA family. Homodimer.

The enzyme catalyses uridine(38/39/40) in tRNA = pseudouridine(38/39/40) in tRNA. Functionally, formation of pseudouridine at positions 38, 39 and 40 in the anticodon stem and loop of transfer RNAs. The sequence is that of tRNA pseudouridine synthase A from Rhodospirillum centenum (strain ATCC 51521 / SW).